The sequence spans 230 residues: Protein tumorous testis (230 aa).

The 92-residue stretch at 37-128 folds into the RRM domain; sequence GELFLSCIPR…RELVLKNVES (92 aa).

Part of a complex composed of at least tut, bam and bgcn; complex formation does not require RNA. Interacts with bam (via N-terminus); the interaction is direct. Interacts with bgcn; the interaction is indirect and is mediated by bam. As part of the bam-bgcn-tut complex associates with twin; may recruit the CCR4-NOT1 deadenylation complex to mRNA 3'UTRs to mediate post-transcriptional regulation of expression.

It is found in the cytoplasm. Functionally, RNA binding protein that forms a complex with bam and bgcn, involved in 3'UTR-dependent regulation of a subset of mRNAs. Preferentially binds a long isoform of mei-P26 transcripts. Involved in 3'UTR-dependent post-transcriptional repression of several 3'-RNA processing factors. Involved in promoting germline stem cell lineage differentiation and mitosis-to-meiosis transition. Required for proper transit amplification of spermatogonia. This chain is Protein tumorous testis, found in Drosophila melanogaster (Fruit fly).